The following is a 254-amino-acid chain: Triosephosphate isomerase (254 aa).

N10–K12 provides a ligand contact to substrate. The Electrophile role is filled by H99. The active-site Proton acceptor is the E169. Substrate is bound by residues G175, S215, and G236–G237.

Belongs to the triosephosphate isomerase family. As to quaternary structure, homodimer.

The protein localises to the cytoplasm. The catalysed reaction is D-glyceraldehyde 3-phosphate = dihydroxyacetone phosphate. Its pathway is carbohydrate biosynthesis; gluconeogenesis. It functions in the pathway carbohydrate degradation; glycolysis; D-glyceraldehyde 3-phosphate from glycerone phosphate: step 1/1. Its function is as follows. Involved in the gluconeogenesis. Catalyzes stereospecifically the conversion of dihydroxyacetone phosphate (DHAP) to D-glyceraldehyde-3-phosphate (G3P). This is Triosephosphate isomerase from Chlamydia felis (strain Fe/C-56) (Chlamydophila felis).